Here is a 398-residue protein sequence, read N- to C-terminus: Subtilisin-like protease CPC735_015300 (398 aa).

Positions 1–19 are cleaved as a signal peptide; sequence MGFIKTLSLSLAAASAANA. Positions 20-116 are excised as a propeptide; the sequence is AKILSPSRPD…IEHDHVVRLT (97 aa). Residues 35–115 enclose the Inhibitor I9 domain; that stretch reads QYIVVMKDGV…FIEHDHVVRL (81 aa). One can recognise a Peptidase S8 domain in the interval 126 to 398; it reads TWGLGRVSHQ…NKLTYNGNGQ (273 aa). Residues Asp158 and His189 each act as charge relay system in the active site. Asn250 carries N-linked (GlcNAc...) asparagine glycosylation. The active-site Charge relay system is the Ser344. The N-linked (GlcNAc...) asparagine glycan is linked to Asn362.

The protein belongs to the peptidase S8 family.

Its subcellular location is the secreted. Secreted subtilisin-like serine protease with keratinolytic activity that contributes to pathogenicity. The sequence is that of Subtilisin-like protease CPC735_015300 from Coccidioides posadasii (strain C735) (Valley fever fungus).